We begin with the raw amino-acid sequence, 1036 residues long: MMKFRFRRQGADPQREKLKQELFTFHKTVEHGFPNQPSALAFDPELRIMAIGTRSGAVKIYGAPGVEFTGLHRDAATVTQMHFLPGQGRLLTLLDDSSLHLWEIIQRNGCAHLEEGLSFHPPSRPSFGNASFPAGLTRVTVVLLAAGDTVVLGTESGSIFFLDVATLALLEGQTLSPDEVLRSVPDDYRCGKALGPVESLQGHLQDPSKILIGYSRGLLVIWSQATQSVEHVFLGNQQLESLCWGRGGSNIISSHSDGSYAIWSTDTGSPPTLQPTVVTTPYGPFPCKAINKILWRSCESGDHFIIFSGGMPRASYGDRHCVSVLRAETLVTLDFTSRVIDFFTVHSTQPEDGFDNPQALAVLLEEELVVLDLQTPGWPAVPAPYLAPLHSSAITCSAHVANVPSKLWARIVSAGERQSPQPASSALSWPITGGRNLAQEPSQRGLLLTGHEDGTVRFWDASGVALRPLYKLSTAGLFQTDCEHADSLAQAVEDDWPPFRKVGCFDPYSDDPRLGIQKVALCKYTAQMVVAGTAGQVLVLELSDVPGEHTVSVASVDLLQDREGFTWKGHERLSPHTGPLPWPAGFQPRVLIQCLPPAAVTAVALHAEWSLVAFGTSHGFGLFDYQRKSPVLARCTLHPNDSLAMEGPLSRVKSLKKSLRQSFRRIRKSRVSGKKRATTASSKLQEANAQLAEQTCPHDVEMTPVQRRIEPRSADDSLSGVVRCLYFADTFLRDATHHGPTMWAGTNSGSVFAYALEVPAATAGGEKRPEQAVEAVLGKEVQLMHRAPVVAIAVLDGRGRPLPEPYEASRDLAQAPDMQGGHAVLIASEEQFKVFTLPKVSAKTKFKLTAHEGCRVRKVALATFASVMSEDYAETCLACLTNLGDVHVFSVPGLRPQVHYSCIRKEDISGIASCVFTRHGQGFYLISPSEFERFSLSARNITEPLCSLDISWPQNATQPRLQESPKLSQANGTRDIILAPESCEGSPSSAHSKRADTMEPPEAALSPVSIDSAASGDTMLDTTGDVTVEYVKDFLG.

WD repeat units lie at residues 38–71, 78–119, 139–175, 199–233, 239–271, 289–331, 339–373, 395–473, 517–592, and 601–662; these read SALA…FTGL, VTQM…GLSF, VTVV…GQTL, SLQG…EHVF, LESL…GSPP, AINK…ETLV, VIDF…VLDL, TCSA…YKLS, QKVA…RVLI, and TAVA…LRQS. At S662 the chain carries Phosphoserine. A disordered region spans residues 670 to 694; that stretch reads RVSGKKRATTASSKLQEANAQLAEQ. Polar residues predominate over residues 678–693; sequence TTASSKLQEANAQLAE. WD repeat units lie at residues 722–782, 791–843, 848–901, and 915–938; these read VRCL…KEVQ, AIAV…VSAK, LTAH…VHYS, and VFTR…SLSA. T957 is subject to Phosphothreonine. 3 positions are modified to phosphoserine: S964, S982, and S989. The segment at 980–1002 is disordered; the sequence is PESCEGSPSSAHSKRADTMEPPE.

This sequence belongs to the WD repeat L(2)GL family. In terms of assembly, associated with nonmuscle myosin II heavy chain. Interacts with PRKCI/aPKC, PARD6B/Par-6 and PARD6A. Interacts with STX4A. Interacts with DCAF1. Interacts with RAB10 (GDP-bound form); the interaction is direct and promotes RAB10 association with membranes and activation through competition with the Rab inhibitor GDI1. In terms of processing, phosphorylated by PRKCI. Expressed at high level in the testis and at lower level in ovary, brain, spleen and kidney.

The protein localises to the early endosome membrane. It localises to the golgi apparatus. The protein resides in the trans-Golgi network membrane. It is found in the golgi apparatus membrane. Its subcellular location is the cell projection. The protein localises to the axon. It localises to the cytoplasm. The protein resides in the cytoskeleton. Its function is as follows. Cortical cytoskeleton protein found in a complex involved in maintaining cell polarity and epithelial integrity. Involved in the regulation of mitotic spindle orientation, proliferation, differentiation and tissue organization of neuroepithelial cells. Involved in axonogenesis through RAB10 activation thereby regulating vesicular membrane trafficking toward the axonal plasma membrane. In Rattus norvegicus (Rat), this protein is Lethal(2) giant larvae protein homolog 1 (Llgl1).